A 187-amino-acid polypeptide reads, in one-letter code: Elongation factor P (187 aa).

Belongs to the elongation factor P family.

It localises to the cytoplasm. It participates in protein biosynthesis; polypeptide chain elongation. Involved in peptide bond synthesis. Stimulates efficient translation and peptide-bond synthesis on native or reconstituted 70S ribosomes in vitro. Probably functions indirectly by altering the affinity of the ribosome for aminoacyl-tRNA, thus increasing their reactivity as acceptors for peptidyl transferase. The polypeptide is Elongation factor P (Synechococcus sp. (strain CC9311)).